Consider the following 325-residue polypeptide: Biotin synthase (325 aa).

The Radical SAM core domain maps to 51 to 280; the sequence is FMGRKADLCT…NVYIRYAGGR (230 aa). The [4Fe-4S] cluster site is built by cysteine 69, cysteine 73, and cysteine 76. [2Fe-2S] cluster contacts are provided by serine 113, cysteine 145, cysteine 205, and arginine 275.

Belongs to the radical SAM superfamily. Biotin synthase family. Homodimer. Requires [4Fe-4S] cluster as cofactor. The cofactor is [2Fe-2S] cluster.

It carries out the reaction (4R,5S)-dethiobiotin + (sulfur carrier)-SH + 2 reduced [2Fe-2S]-[ferredoxin] + 2 S-adenosyl-L-methionine = (sulfur carrier)-H + biotin + 2 5'-deoxyadenosine + 2 L-methionine + 2 oxidized [2Fe-2S]-[ferredoxin]. The protein operates within cofactor biosynthesis; biotin biosynthesis; biotin from 7,8-diaminononanoate: step 2/2. Catalyzes the conversion of dethiobiotin (DTB) to biotin by the insertion of a sulfur atom into dethiobiotin via a radical-based mechanism. The protein is Biotin synthase of Clostridioides difficile (strain 630) (Peptoclostridium difficile).